The chain runs to 133 residues: Large ribosomal subunit protein bL20 (133 aa).

Belongs to the bacterial ribosomal protein bL20 family.

Functionally, binds directly to 23S ribosomal RNA and is necessary for the in vitro assembly process of the 50S ribosomal subunit. It is not involved in the protein synthesizing functions of that subunit. This Bartonella quintana (strain Toulouse) (Rochalimaea quintana) protein is Large ribosomal subunit protein bL20.